The sequence spans 267 residues: Phosphatidylserine decarboxylase proenzyme (267 aa).

Active-site charge relay system; for autoendoproteolytic cleavage activity residues include Asp78, His132, and Ser236. Ser236 acts as the Schiff-base intermediate with substrate; via pyruvic acid; for decarboxylase activity in catalysis. Ser236 carries the pyruvic acid (Ser); by autocatalysis modification.

This sequence belongs to the phosphatidylserine decarboxylase family. PSD-B subfamily. Prokaryotic type I sub-subfamily. In terms of assembly, heterodimer of a large membrane-associated beta subunit and a small pyruvoyl-containing alpha subunit. Pyruvate serves as cofactor. Post-translationally, is synthesized initially as an inactive proenzyme. Formation of the active enzyme involves a self-maturation process in which the active site pyruvoyl group is generated from an internal serine residue via an autocatalytic post-translational modification. Two non-identical subunits are generated from the proenzyme in this reaction, and the pyruvate is formed at the N-terminus of the alpha chain, which is derived from the carboxyl end of the proenzyme. The autoendoproteolytic cleavage occurs by a canonical serine protease mechanism, in which the side chain hydroxyl group of the serine supplies its oxygen atom to form the C-terminus of the beta chain, while the remainder of the serine residue undergoes an oxidative deamination to produce ammonia and the pyruvoyl prosthetic group on the alpha chain. During this reaction, the Ser that is part of the protease active site of the proenzyme becomes the pyruvoyl prosthetic group, which constitutes an essential element of the active site of the mature decarboxylase.

It localises to the cell membrane. It carries out the reaction a 1,2-diacyl-sn-glycero-3-phospho-L-serine + H(+) = a 1,2-diacyl-sn-glycero-3-phosphoethanolamine + CO2. Its pathway is phospholipid metabolism; phosphatidylethanolamine biosynthesis; phosphatidylethanolamine from CDP-diacylglycerol: step 2/2. Functionally, catalyzes the formation of phosphatidylethanolamine (PtdEtn) from phosphatidylserine (PtdSer). This is Phosphatidylserine decarboxylase proenzyme from Helicobacter pylori (strain Shi470).